We begin with the raw amino-acid sequence, 220 residues long: Octanoyltransferase (220 aa).

The BPL/LPL catalytic domain maps to Gly-29–Pro-217. Residues Arg-68 to His-75, Ala-148 to Gly-150, and Gly-161 to Ser-163 each bind substrate. Cys-179 (acyl-thioester intermediate) is an active-site residue.

The protein belongs to the LipB family.

It localises to the cytoplasm. It carries out the reaction octanoyl-[ACP] + L-lysyl-[protein] = N(6)-octanoyl-L-lysyl-[protein] + holo-[ACP] + H(+). The protein operates within protein modification; protein lipoylation via endogenous pathway; protein N(6)-(lipoyl)lysine from octanoyl-[acyl-carrier-protein]: step 1/2. Functionally, catalyzes the transfer of endogenously produced octanoic acid from octanoyl-acyl-carrier-protein onto the lipoyl domains of lipoate-dependent enzymes. Lipoyl-ACP can also act as a substrate although octanoyl-ACP is likely to be the physiological substrate. In Dinoroseobacter shibae (strain DSM 16493 / NCIMB 14021 / DFL 12), this protein is Octanoyltransferase.